A 468-amino-acid chain; its full sequence is UDP-N-acetylmuramate--L-alanine ligase (468 aa).

121–127 contributes to the ATP binding site; sequence GSHGKTT.

The protein belongs to the MurCDEF family.

The protein resides in the cytoplasm. The catalysed reaction is UDP-N-acetyl-alpha-D-muramate + L-alanine + ATP = UDP-N-acetyl-alpha-D-muramoyl-L-alanine + ADP + phosphate + H(+). It functions in the pathway cell wall biogenesis; peptidoglycan biosynthesis. Functionally, cell wall formation. The protein is UDP-N-acetylmuramate--L-alanine ligase of Borreliella burgdorferi (strain ATCC 35210 / DSM 4680 / CIP 102532 / B31) (Borrelia burgdorferi).